Consider the following 197-residue polypeptide: Protein GrpE (197 aa).

The segment at 1–39 is disordered; sequence MSSKEQKTPEGQAPEEIIMDQHEEIEAVEPEASAEQVDP.

This sequence belongs to the GrpE family. Homodimer.

It is found in the cytoplasm. Its function is as follows. Participates actively in the response to hyperosmotic and heat shock by preventing the aggregation of stress-denatured proteins, in association with DnaK and GrpE. It is the nucleotide exchange factor for DnaK and may function as a thermosensor. Unfolded proteins bind initially to DnaJ; upon interaction with the DnaJ-bound protein, DnaK hydrolyzes its bound ATP, resulting in the formation of a stable complex. GrpE releases ADP from DnaK; ATP binding to DnaK triggers the release of the substrate protein, thus completing the reaction cycle. Several rounds of ATP-dependent interactions between DnaJ, DnaK and GrpE are required for fully efficient folding. The chain is Protein GrpE from Escherichia coli O45:K1 (strain S88 / ExPEC).